Consider the following 406-residue polypeptide: Eukaryotic initiation factor 4A-I (406 aa).

Residues 1 to 21 (MSASQDSRSRDNGPDGMEPEG) form a disordered region. At S2 the chain carries N-acetylserine. S4 carries the phosphoserine modification. Residues 32–60 (DSLDDMNLSESLLRGIYAYGFEKPSAIQQ) carry the Q motif motif. Residues 63-234 (ILSCIKGYDV…KKFMRDPIRI (172 aa)) form the Helicase ATP-binding domain. 76–83 (AQSGTGKT) serves as a coordination point for ATP. K118 is subject to N6-acetyllysine. K146 is covalently cross-linked (Glycyl lysine isopeptide (Lys-Gly) (interchain with G-Cter in SUMO2)). T158 carries the post-translational modification Phosphothreonine. Position 174 is an N6-acetyllysine (K174). Residues 182-185 (DEAD) carry the DEAD box motif. Position 193 is an N6-acetyllysine (K193). K225 participates in a covalent cross-link: Glycyl lysine isopeptide (Lys-Gly) (interchain with G-Cter in SUMO2). K238 is modified (N6-acetyllysine; alternate). Residue K238 forms a Glycyl lysine isopeptide (Lys-Gly) (interchain with G-Cter in SUMO2); alternate linkage. The region spanning 245–406 (GIRQFYINVE…EMPLNVADLI (162 aa)) is the Helicase C-terminal domain. Glycyl lysine isopeptide (Lys-Gly) (interchain with G-Cter in SUMO2) cross-links involve residues K309, K369, and K381.

It belongs to the DEAD box helicase family. eIF4A subfamily. EIF4F is a multi-subunit complex, the composition of which varies with external and internal environmental conditions. It is composed of at least EIF4A, EIF4E and EIF4G1/EIF4G3. Interacts with PAIP1, EIF4E and UPF2. Found in a complex with XPO7, EIF4A1, ARHGAP1, VPS26A, VPS29, VPS35 and SFN. May interact with NOM1. Interacts with PDCD4; this interferes with the interaction between EIF4A and EIF4G. Interacts with RBM4. Interacts with DDX3X in an RNA-independent manner. Interacts with PKP1 (via N-terminus); the interaction promotes EIF4A1 recruitment to the cap-dependent translation complex and EIF4A1 ATPase activity.

Its subcellular location is the cytoplasm. The protein resides in the perinuclear region. It is found in the cell membrane. It localises to the stress granule. The catalysed reaction is ATP + H2O = ADP + phosphate + H(+). ATP-dependent RNA helicase which is a subunit of the eIF4F complex involved in cap recognition and is required for mRNA binding to ribosome. In the current model of translation initiation, eIF4A unwinds RNA secondary structures in the 5'-UTR of mRNAs which is necessary to allow efficient binding of the small ribosomal subunit, and subsequent scanning for the initiator codon. As a result, promotes cell proliferation and growth. The chain is Eukaryotic initiation factor 4A-I (EIF4A1) from Pongo abelii (Sumatran orangutan).